The sequence spans 762 residues: 5-methyltetrahydropteroyltriglutamate--homocysteine methyltransferase (762 aa).

Residues 17-20 (REWK) and K111 each bind 5-methyltetrahydropteroyltri-L-glutamate. L-homocysteine-binding positions include 435 to 437 (IGS) and E488. L-methionine is bound by residues 435-437 (IGS) and E488. 5-methyltetrahydropteroyltri-L-glutamate-binding positions include 519 to 520 (RC) and W565. D603 contacts L-homocysteine. L-methionine is bound at residue D603. E609 contributes to the 5-methyltetrahydropteroyltri-L-glutamate binding site. Zn(2+) contacts are provided by H645, C647, and E669. The Proton donor role is filled by H698. Residue C730 coordinates Zn(2+).

It belongs to the vitamin-B12 independent methionine synthase family. The cofactor is Zn(2+).

The enzyme catalyses 5-methyltetrahydropteroyltri-L-glutamate + L-homocysteine = tetrahydropteroyltri-L-glutamate + L-methionine. It participates in amino-acid biosynthesis; L-methionine biosynthesis via de novo pathway; L-methionine from L-homocysteine (MetE route): step 1/1. Catalyzes the transfer of a methyl group from 5-methyltetrahydrofolate to homocysteine resulting in methionine formation. This chain is 5-methyltetrahydropteroyltriglutamate--homocysteine methyltransferase, found in Bacillus cytotoxicus (strain DSM 22905 / CIP 110041 / 391-98 / NVH 391-98).